The primary structure comprises 264 residues: Zinc import ATP-binding protein ZnuC (264 aa).

The 216-residue stretch at 11-226 folds into the ABC transporter domain; that stretch reads IELQNIKVVF…PTFIHLFGDQ (216 aa). 43–50 contacts ATP; sequence GPNGGGKS.

The protein belongs to the ABC transporter superfamily. Zinc importer (TC 3.A.1.15.5) family. As to quaternary structure, the complex is composed of two ATP-binding proteins (ZnuC), two transmembrane proteins (ZnuB) and a solute-binding protein (ZnuA).

The protein resides in the cell inner membrane. The catalysed reaction is Zn(2+)(out) + ATP(in) + H2O(in) = Zn(2+)(in) + ADP(in) + phosphate(in) + H(+)(in). Part of the ABC transporter complex ZnuABC involved in zinc import. Responsible for energy coupling to the transport system. The polypeptide is Zinc import ATP-binding protein ZnuC (Mannheimia succiniciproducens (strain KCTC 0769BP / MBEL55E)).